The sequence spans 744 residues: FNIP repeat-containing protein cigB (744 aa).

FNIP repeat units lie at residues 340–376 (FNQK…TVTT), 383–422 (FNQK…TVIL), 426–462 (FNQK…TVTR), 469–508 (FNQK…TITL), 512–550 (FNQK…TTVR), 555–594 (FNQK…TVIL), 598–635 (FNQK…VTTV), 641–678 (FNQK…VTTV), and 684–723 (FNQK…NVYI).

The chain is FNIP repeat-containing protein cigB (cigB) from Dictyostelium discoideum (Social amoeba).